Consider the following 501-residue polypeptide: Probable cysteine desulfurase, mitochondrial (501 aa).

Residues 172-173, asparagine 252, glutamine 280, and 300-302 contribute to the pyridoxal 5'-phosphate site; these read AT and SAH. An N6-(pyridoxal phosphate)lysine modification is found at lysine 303. Threonine 340 serves as a coordination point for pyridoxal 5'-phosphate. Cysteine 425 acts as the Cysteine persulfide intermediate in catalysis. Position 425 (cysteine 425) interacts with [2Fe-2S] cluster.

The protein belongs to the class-V pyridoxal-phosphate-dependent aminotransferase family. NifS/IscS subfamily. Pyridoxal 5'-phosphate serves as cofactor.

Its subcellular location is the mitochondrion. It catalyses the reaction (sulfur carrier)-H + L-cysteine = (sulfur carrier)-SH + L-alanine. Its function is as follows. Catalyzes the removal of elemental sulfur from cysteine to produce alanine. It supplies the inorganic sulfur for iron-sulfur (Fe-S) clusters. Plays a role in both tRNA-processing and mitochondrial metabolism. Involved in the 2-thio-modification of both 5-carboxymethylaminomethyl-2-thiouridine in mitochondrial tRNAs and 5-methoxycarbonylmethyl-2-thiouridine (mcm5s2U) in cytoplasmic tRNAs. This is Probable cysteine desulfurase, mitochondrial from Schizosaccharomyces pombe (strain 972 / ATCC 24843) (Fission yeast).